A 207-amino-acid chain; its full sequence is MALRLVEELTNEGIIKTERVKKAMLAVPREEFVMPEYRMMAYEDRPLPLFFDATISAPHMVAMMCELVEPRPGMKILEVGTGSGYQAAVCAEAIERKGKVYTIEIVKELAIYAAQNIERLGYWGIVEVYHGDGKKGLERHAPFDAIIVTAAARTIPSELIKQLKDGGVLVIPIEEGVGQVLYKITKRGEKIEKRAITYVLFVPLRDS.

S56 is a catalytic residue.

It belongs to the methyltransferase superfamily. L-isoaspartyl/D-aspartyl protein methyltransferase family.

Its subcellular location is the cytoplasm. The enzyme catalyses [protein]-L-isoaspartate + S-adenosyl-L-methionine = [protein]-L-isoaspartate alpha-methyl ester + S-adenosyl-L-homocysteine. Its function is as follows. Catalyzes the methyl esterification of L-isoaspartyl residues in peptides and proteins that result from spontaneous decomposition of normal L-aspartyl and L-asparaginyl residues. It plays a role in the repair and/or degradation of damaged proteins. The chain is Protein-L-isoaspartate O-methyltransferase from Pyrobaculum islandicum (strain DSM 4184 / JCM 9189 / GEO3).